The primary structure comprises 100 residues: Small ubiquitin-related modifier 1 (100 aa).

Residues 1-12 show a composition bias toward basic and acidic residues; sequence MSANQEEDKKPG. Positions 1-21 are disordered; that stretch reads MSANQEEDKKPGDGGAHINLK. Residues 16-93 enclose the Ubiquitin-like domain; sequence AHINLKVKGQ…IDAMLHQTGG (78 aa). Residue G93 forms a Glycyl lysine isopeptide (Gly-Lys) (interchain with K-? in acceptor proteins) linkage.

The protein belongs to the ubiquitin family. SUMO subfamily. In terms of assembly, interacts with SAE2, SCE1, SIZ1 and MMS21. Interacts with HSFA2. Covalently attached to ABI5, FLD, GTE3, HSFA2 and ICE1.

Its subcellular location is the nucleus. The protein localises to the cytoplasm. Its function is as follows. Ubiquitin-like protein which can be covalently attached to target lysines as a monomer. Does not seem to be involved in protein degradation and may function as an antagonist of ubiquitin in the degradation process. Required for the massive protein sumoylation in the nucleus induced by heat shock and controlled by SIZ1. Involved in the regulation of the heat stress transcription factor HSFA2 in acquired thermotolerance. The protein is Small ubiquitin-related modifier 1 of Arabidopsis thaliana (Mouse-ear cress).